The chain runs to 163 residues: MAKVLLGFMGVGKSSVAPYLNGRFVDMDQVIEDKIGMSITDFFAKEGEASFRQIESETLEELLQEGDDVIISTGGGVVVTECNRKLLKKNRKHNVWLHSSFDVVYNRIKKDIKNQRPLFLNHSKEEFKAIYDGRMALYKGLADLVVTVDNRTPEEVARFIKCM.

10–15 (GVGKSS) contributes to the ATP binding site. Serine 14 provides a ligand contact to Mg(2+). Positions 28, 52, and 75 each coordinate substrate. Arginine 116 lines the ATP pocket. Residue arginine 134 participates in substrate binding. Arginine 151 is a binding site for ATP.

This sequence belongs to the shikimate kinase family. As to quaternary structure, monomer. The cofactor is Mg(2+).

It is found in the cytoplasm. The catalysed reaction is shikimate + ATP = 3-phosphoshikimate + ADP + H(+). Its pathway is metabolic intermediate biosynthesis; chorismate biosynthesis; chorismate from D-erythrose 4-phosphate and phosphoenolpyruvate: step 5/7. Catalyzes the specific phosphorylation of the 3-hydroxyl group of shikimic acid using ATP as a cosubstrate. The sequence is that of Shikimate kinase from Streptococcus thermophilus (strain ATCC BAA-491 / LMD-9).